A 283-amino-acid chain; its full sequence is 2-hydroxy-6-oxononadienedioate/2-hydroxy-6-oxononatrienedioate hydrolase (283 aa).

The AB hydrolase-1 domain maps to Val35–His269. His263 serves as the catalytic Proton acceptor.

Belongs to the AB hydrolase superfamily. MhpC family. As to quaternary structure, homodimer.

It carries out the reaction (2Z,4E)-2-hydroxy-6-oxonona-2,4-dienedioate + H2O = (2Z)-2-hydroxypenta-2,4-dienoate + succinate + H(+). The enzyme catalyses (2Z,4E,7E)-2-hydroxy-6-oxonona-2,4,7-trienedioate + H2O = (2Z)-2-hydroxypenta-2,4-dienoate + fumarate + H(+). Its pathway is aromatic compound metabolism; 3-phenylpropanoate degradation. Catalyzes the cleavage of the C5-C6 bond of 2-hydroxy-6-oxononadienedioate and 2-hydroxy-6-oxononatrienedioate, a dienol ring fission product of the bacterial meta-cleavage pathway for degradation of phenylpropionic acid. The sequence is that of 2-hydroxy-6-oxononadienedioate/2-hydroxy-6-oxononatrienedioate hydrolase from Pseudomonas sp.